A 295-amino-acid chain; its full sequence is uncharacterized protein (295 aa).

NAD(+) contacts are provided by residues 11–25 (GYIGLGNQGAPMAKR) and T101. The active site involves K176. K252 contacts NAD(+).

This sequence belongs to the HIBADH-related family.

This is an uncharacterized protein from Mycobacterium tuberculosis (strain CDC 1551 / Oshkosh).